Here is a 102-residue protein sequence, read N- to C-terminus: EPIDERMAL PATTERNING FACTOR-like protein 9 (102 aa).

Positions 1–31 (MKHEMMNIKPRCITIFFLLFALLLGNYVVQA) are cleaved as a signal peptide. Intrachain disulfides connect Cys65–Cys98, Cys70–Cys77, and Cys73–Cys100.

This sequence belongs to the plant cysteine rich small secretory peptide family. Epidermal patterning factor subfamily. In terms of assembly, interacts with ERECTA and TMM. In terms of tissue distribution, expressed in immature organs, including leaves, stems and flower buds, but not in roots, shoot apical meristem and petals. Detected in the mesophyll tissues but not in the epidermal tissues where stomata develop.

The protein resides in the secreted. Its subcellular location is the extracellular space. The protein localises to the apoplast. In terms of biological role, positively regulates stomatal density and patterning. Acts by competing with EPF2 (AC Q8LC53) for the same receptors, ERECTA (AC Q42371) and TMM (AC Q9SSD1). Not cleaved by the protease CRSP (AC Q9LNU1). The protein is EPIDERMAL PATTERNING FACTOR-like protein 9 of Arabidopsis thaliana (Mouse-ear cress).